A 146-amino-acid chain; its full sequence is MLMPRRVQHRKQHRYRTKGIAWRGSTLAFGDYGIQALEPAWVTAQQIEAARRAITNAVRRGGKVWIRVFPDKPVTKKPAETRMGSGKGNPEYWMDVVKPGRILFELAGVREELALEALTRAIHKLPCRCRIVKRERPGEAAEEEAS.

Belongs to the universal ribosomal protein uL16 family. In terms of assembly, part of the 50S ribosomal subunit.

In terms of biological role, binds 23S rRNA and is also seen to make contacts with the A and possibly P site tRNAs. The sequence is that of Large ribosomal subunit protein uL16 from Thermomicrobium roseum (strain ATCC 27502 / DSM 5159 / P-2).